A 373-amino-acid chain; its full sequence is 3-dehydroquinate synthase (373 aa).

NAD(+) contacts are provided by residues 67 to 72 (EGEQAK), 101 to 105 (GVVLD), 125 to 126 (TT), K138, and K147. Zn(2+)-binding residues include E180, H240, and H256.

This sequence belongs to the sugar phosphate cyclases superfamily. Dehydroquinate synthase family. NAD(+) is required as a cofactor. Co(2+) serves as cofactor. It depends on Zn(2+) as a cofactor.

The protein resides in the cytoplasm. It catalyses the reaction 7-phospho-2-dehydro-3-deoxy-D-arabino-heptonate = 3-dehydroquinate + phosphate. Its pathway is metabolic intermediate biosynthesis; chorismate biosynthesis; chorismate from D-erythrose 4-phosphate and phosphoenolpyruvate: step 2/7. Catalyzes the conversion of 3-deoxy-D-arabino-heptulosonate 7-phosphate (DAHP) to dehydroquinate (DHQ). The polypeptide is 3-dehydroquinate synthase (aroB) (Chlamydia muridarum (strain MoPn / Nigg)).